A 222-amino-acid polypeptide reads, in one-letter code: uncharacterized protein (222 aa).

Residues 8–77 (AKKGQIIYRY…GNAGYFVAKN (70 aa)) enclose the HTH gntR-type domain.

This is an uncharacterized protein from Mycoplasma pneumoniae (strain ATCC 29342 / M129 / Subtype 1) (Mycoplasmoides pneumoniae).